A 267-amino-acid chain; its full sequence is uncharacterized protein (267 aa).

A disordered region spans residues 58-90; sequence RHTDDKQEKNQNEGEDNQKGENKTTDQQDGPKK. A run of 2 helical transmembrane segments spans residues 101–121 and 226–246; these read IYVLAVAGLSFVTSFIMLSQM and GMTTVKMIQLIIGVVILAWLG.

The protein localises to the membrane. This is an uncharacterized protein from Caenorhabditis elegans.